Consider the following 257-residue polypeptide: NAD-capped RNA hydrolase NudC (257 aa).

Substrate contacts are provided by lysine 25 and arginine 69. Zn(2+) contacts are provided by cysteine 98 and cysteine 101. A substrate-binding site is contributed by glutamate 111. Residues cysteine 116 and cysteine 119 each contribute to the Zn(2+) site. Tyrosine 124 serves as a coordination point for substrate. A Nudix hydrolase domain is found at 125-248 (PQIAPCIIVA…TVARRLIEDT (124 aa)). Alanine 158, glutamate 174, and glutamate 178 together coordinate a divalent metal cation. Residues 159-180 (GFVEVGETLEQAVAREVMEESG) carry the Nudix box motif. 192–199 (QPWPFPQS) provides a ligand contact to substrate. An a divalent metal cation-binding site is contributed by glutamate 219. Position 241 (alanine 241) interacts with substrate.

It belongs to the Nudix hydrolase family. NudC subfamily. As to quaternary structure, homodimer. Requires Mg(2+) as cofactor. It depends on Mn(2+) as a cofactor. Zn(2+) is required as a cofactor.

The catalysed reaction is a 5'-end NAD(+)-phospho-ribonucleoside in mRNA + H2O = a 5'-end phospho-adenosine-phospho-ribonucleoside in mRNA + beta-nicotinamide D-ribonucleotide + 2 H(+). It catalyses the reaction NAD(+) + H2O = beta-nicotinamide D-ribonucleotide + AMP + 2 H(+). The enzyme catalyses NADH + H2O = reduced beta-nicotinamide D-ribonucleotide + AMP + 2 H(+). Functionally, mRNA decapping enzyme that specifically removes the nicotinamide adenine dinucleotide (NAD) cap from a subset of mRNAs by hydrolyzing the diphosphate linkage to produce nicotinamide mononucleotide (NMN) and 5' monophosphate mRNA. The NAD-cap is present at the 5'-end of some mRNAs and stabilizes RNA against 5'-processing. Has preference for mRNAs with a 5'-end purine. Catalyzes the hydrolysis of a broad range of dinucleotide pyrophosphates. In Shigella flexneri, this protein is NAD-capped RNA hydrolase NudC.